The chain runs to 232 residues: Lipoprotein-releasing system ATP-binding protein LolD (232 aa).

The ABC transporter domain maps to 6-231 (ISCENLNKVY…KLTIKESQHV (226 aa)). 42–49 (GSSGSGKS) provides a ligand contact to ATP.

It belongs to the ABC transporter superfamily. Lipoprotein translocase (TC 3.A.1.125) family. The complex is composed of two ATP-binding proteins (LolD) and two transmembrane proteins (LolC and LolE).

It localises to the cell inner membrane. In terms of biological role, part of the ABC transporter complex LolCDE involved in the translocation of mature outer membrane-directed lipoproteins, from the inner membrane to the periplasmic chaperone, LolA. Responsible for the formation of the LolA-lipoprotein complex in an ATP-dependent manner. In Pseudoalteromonas translucida (strain TAC 125), this protein is Lipoprotein-releasing system ATP-binding protein LolD.